A 241-amino-acid chain; its full sequence is Orotidine 5'-phosphate decarboxylase (241 aa).

Residues Asp18, Lys39, 66-75 (DLKFHDIPAT), Thr130, Arg192, Gln201, Gly221, and Arg222 contribute to the substrate site. The Proton donor role is filled by Lys68.

Belongs to the OMP decarboxylase family. Type 1 subfamily. As to quaternary structure, homodimer.

It carries out the reaction orotidine 5'-phosphate + H(+) = UMP + CO2. Its pathway is pyrimidine metabolism; UMP biosynthesis via de novo pathway; UMP from orotate: step 2/2. Its function is as follows. Catalyzes the decarboxylation of orotidine 5'-monophosphate (OMP) to uridine 5'-monophosphate (UMP). The protein is Orotidine 5'-phosphate decarboxylase of Synechococcus sp. (strain CC9605).